Consider the following 63-residue polypeptide: Small ribosomal subunit protein bS21 (63 aa).

This sequence belongs to the bacterial ribosomal protein bS21 family.

This is Small ribosomal subunit protein bS21 from Azobacteroides pseudotrichonymphae genomovar. CFP2.